The sequence spans 120 residues: Dynein 11 kDa light chain, flagellar outer arm (120 aa).

The protein belongs to the dynein light chain family. Consists of at least 3 heavy chains (alpha, beta and gamma), 2 intermediate chains and 8 light chains.

It localises to the cytoplasm. The protein localises to the cytoskeleton. The protein resides in the flagellum axoneme. This chain is Dynein 11 kDa light chain, flagellar outer arm, found in Chlamydomonas reinhardtii (Chlamydomonas smithii).